The chain runs to 301 residues: Phosphonates import ATP-binding protein PhnC (301 aa).

The region spanning 8-256 (IRIERLSKTF…LLKTLYGDEA (249 aa)) is the ABC transporter domain. Residue 41-48 (GASGSGKS) coordinates ATP. The segment at 264–287 (AQGPDDTESKNTADNTPLQDAAPA) is disordered.

This sequence belongs to the ABC transporter superfamily. Phosphonates importer (TC 3.A.1.9.1) family. The complex is composed of two ATP-binding proteins (PhnC), two transmembrane proteins (PhnE) and a solute-binding protein (PhnD).

The protein resides in the cell inner membrane. The catalysed reaction is phosphonate(out) + ATP + H2O = phosphonate(in) + ADP + phosphate + H(+). Its function is as follows. Part of the ABC transporter complex PhnCDE involved in phosphonates import. Responsible for energy coupling to the transport system. This is Phosphonates import ATP-binding protein PhnC from Paraburkholderia xenovorans (strain LB400).